Consider the following 363-residue polypeptide: 3-dehydroquinate synthase (363 aa).

NAD(+) contacts are provided by residues 134 to 135 (TT), lysine 147, and lysine 156. Residues glutamate 189, histidine 254, and histidine 271 each contribute to the Zn(2+) site.

Belongs to the sugar phosphate cyclases superfamily. Dehydroquinate synthase family. Requires Co(2+) as cofactor. It depends on Zn(2+) as a cofactor. The cofactor is NAD(+).

The protein localises to the cytoplasm. The catalysed reaction is 7-phospho-2-dehydro-3-deoxy-D-arabino-heptonate = 3-dehydroquinate + phosphate. It participates in metabolic intermediate biosynthesis; chorismate biosynthesis; chorismate from D-erythrose 4-phosphate and phosphoenolpyruvate: step 2/7. Catalyzes the conversion of 3-deoxy-D-arabino-heptulosonate 7-phosphate (DAHP) to dehydroquinate (DHQ). This is 3-dehydroquinate synthase from Prochlorococcus marinus (strain MIT 9312).